The following is a 48-amino-acid chain: ATP synthase protein 8 (48 aa).

Met-1 is subject to N-formylmethionine. At 1–12 (MPQLVPFYFTNQ) the chain is on the mitochondrial intermembrane side. Residues 13 to 32 (IFYGFASLSVIVYLFSIYIL) form a helical membrane-spanning segment. Residues 33-48 (PHYLEIYVTRIFITKT) lie on the Mitochondrial matrix side of the membrane.

In terms of assembly, F-type ATP synthases have 2 components, the catalytic core F(1) and the membrane-embedded component F(0), linked together by a central stalk and a peripheral stalk. The central stalk, also called rotor shaft, is often seen as part of F(1). The peripheral stalk is seen as part of F(0). F(0) contains the membrane channel next to the rotor. F-type ATP synthases form dimers but each monomer functions independently in ATP generation. The dimer consists of 17 different polypeptides: ATP1 (subunit alpha, 3 molecules per monomer, part of F(1)), ATP2 (subunit beta, 3 copies per monomer, part of F(1)), ATP3 (subunit gamma, part of the central stalk), ATP4 (subunit b, part of the peripheral stalk), ATP5/OSCP (subunit 5/OSCP, part of the peripheral stalk), ATP6 (subunit a, part of the peripheral stalk), ATP7 (subunit d, part of the peripheral stalk), ATP8 (subunit 8, part of the peripheral stalk), OLI1 (subunit c, part of the rotor, 10 molecules per monomer), ATP14 (subunit h, part of the peripheral stalk), ATP15 (subunit epsilon, part of the central stalk), ATP16 (subunit delta, part of the central stalk), ATP17 (subunit f, part of the peripheral stalk), ATP18 (subunit i/j, part of the peripheral stalk), ATP19 (subunit k, dimer-specific, at interface between monomers), ATP20 (subunit g, at interface between monomers), TIM11 (subunit e, at interface between monomers).

It localises to the mitochondrion inner membrane. Its function is as follows. Mitochondrial membrane ATP synthase (F(1)F(0) ATP synthase or Complex V) produces ATP from ADP in the presence of a proton gradient across the membrane which is generated by electron transport complexes of the respiratory chain. F-type ATP synthases consist of two structural domains, F(1) - containing the extramembraneous catalytic core, and F(0) - containing the membrane proton channel, linked together by a central stalk and a peripheral stalk. During catalysis, ATP synthesis in the catalytic domain of F(1) is coupled via a rotary mechanism of the central stalk subunits to proton translocation. Part of the complex F(0) domain. Minor subunit located with subunit a/ATP6 in the membrane. In Yarrowia lipolytica (strain CLIB 122 / E 150) (Yeast), this protein is ATP synthase protein 8.